A 368-amino-acid chain; its full sequence is Type 2 DNA topoisomerase 6 subunit A (368 aa).

A Topo IIA-type catalytic domain is found at 9–148 (PDTEEAREQL…FHMRPEESGA (140 aa)). The O-(5'-phospho-DNA)-tyrosine intermediate role is filled by Tyr-103. Mg(2+) contacts are provided by Glu-201 and Asp-253.

Belongs to the TOP6A family. As to quaternary structure, homodimer. Heterotetramer of two Top6A and two Top6B chains. The cofactor is Mg(2+).

The enzyme catalyses ATP-dependent breakage, passage and rejoining of double-stranded DNA.. In terms of biological role, relaxes both positive and negative superturns and exhibits a strong decatenase activity. The sequence is that of Type 2 DNA topoisomerase 6 subunit A from Haloarcula marismortui (strain ATCC 43049 / DSM 3752 / JCM 8966 / VKM B-1809) (Halobacterium marismortui).